We begin with the raw amino-acid sequence, 521 residues long: Nitric oxide reductase transcription regulator NorR2 (521 aa).

Asp-56 bears the 4-aspartylphosphate mark. The Sigma-54 factor interaction domain maps to 193–422; it reads IIGQSEAIAN…LEHVISRAAL (230 aa). Residues 221–228 and 293–302 contribute to the ATP site; these read GETGVGKE and EVGELPLAIQ. The segment at residues 497-516 is a DNA-binding region (H-T-H motif); sequence WAQAARQLGIDASNLHKLAR.

It functions in the pathway nitrogen metabolism; nitrate reduction (denitrification) [regulation]. In terms of biological role, required for the nitric oxide (NO) induced expression of NO reductase. Not required for expression of 2 other pathway members, nitrate reductase (nirS) and nitrous oxide reductase (nosZ). This is Nitric oxide reductase transcription regulator NorR2 (norR2) from Cupriavidus necator (strain ATCC 17699 / DSM 428 / KCTC 22496 / NCIMB 10442 / H16 / Stanier 337) (Ralstonia eutropha).